The chain runs to 412 residues: D-amino acid dehydrogenase 3 (412 aa).

Position 4-18 (4-18) interacts with FAD; it reads IVVIGAGIAGVSTAY.

It belongs to the DadA oxidoreductase family. FAD serves as cofactor.

The enzyme catalyses a D-alpha-amino acid + A + H2O = a 2-oxocarboxylate + AH2 + NH4(+). Oxidative deamination of D-amino acids. The chain is D-amino acid dehydrogenase 3 (dadA3) from Mesorhizobium japonicum (strain LMG 29417 / CECT 9101 / MAFF 303099) (Mesorhizobium loti (strain MAFF 303099)).